Here is a 667-residue protein sequence, read N- to C-terminus: Transcription factor 4 (667 aa).

Residues methionine 1–arginine 83 are essential for MYOD1 inhibition. Positions aspartate 18 to phenylalanine 26 match the 9aaTAD motif. 5 disordered regions span residues alanine 24–serine 245, leucine 263–glycine 321, histidine 336–leucine 379, serine 466–asparagine 570, and lysine 634–methionine 667. A compositionally biased stretch (polar residues) spans proline 29–asparagine 49. Phosphoserine is present on residues serine 66, serine 87, and serine 92. Polar residues-rich tracts occupy residues glycine 107–leucine 126, glycine 137–asparagine 155, lysine 205–phenylalanine 216, and proline 266–isoleucine 306. The segment covering threonine 337 to proline 348 has biased composition (low complexity). Positions asparagine 365 to asparagine 374 are enriched in polar residues. Position 372 is a phosphoserine (serine 372). The interval leucine 379–leucine 400 is leucine-zipper. Composition is skewed to low complexity over residues leucine 467–glutamine 480 and glycine 503–glutamate 512. Residue serine 515 is modified to Phosphoserine. 2 stretches are compositionally biased toward basic and acidic residues: residues lysine 527–lysine 542 and proline 555–asparagine 570. Residues glutamate 564–leucine 617 form the bHLH domain. The segment at glutamine 619–serine 642 is class A specific domain.

In terms of assembly, efficient DNA binding requires dimerization with another bHLH protein. Forms homo- or heterooligomers with myogenin. Interacts with HIVEP2. Interacts with NEUROD2. Interacts with AGBL1. Interacts with BHLHA9. In terms of tissue distribution, expressed in adult heart, brain, placenta, skeletal muscle and to a lesser extent in the lung. In developing embryonic tissues, expression mostly occurs in the brain.

It localises to the nucleus. Functionally, transcription factor that binds to the immunoglobulin enhancer Mu-E5/KE5-motif. Involved in the initiation of neuronal differentiation. Activates transcription by binding to the E box (5'-CANNTG-3'). Binds to the E-box present in the somatostatin receptor 2 initiator element (SSTR2-INR) to activate transcription. Preferentially binds to either 5'-ACANNTGT-3' or 5'-CCANNTGG-3'. This Homo sapiens (Human) protein is Transcription factor 4 (TCF4).